A 91-amino-acid chain; its full sequence is uncharacterized protein (91 aa).

This sequence belongs to the FrmR/RcnR family.

It is found in the cytoplasm. This is an uncharacterized protein from Serratia marcescens.